The following is a 498-amino-acid chain: Ammonium transporter 1 member 1 (498 aa).

Helical transmembrane passes span 39–59 (LLFS…LCAG), 74–94 (VLDA…FAFG), 120–140 (FFLF…GSIA), 148–168 (YLIY…HWIW), 192–212 (FAGS…GALI), 236–256 (LVVL…PGSF), 274–296 (SGVG…TTLF), 307–327 (VVDV…GCSV), 331–351 (WAAI…NALA), 360–380 (LEAA…TALF), and 411–431 (VIQI…LFYG).

The protein belongs to the ammonia transporter channel (TC 1.A.11.2) family. As to expression, expressed in roots and shoots.

It localises to the membrane. Ammonium transporter probably involved in ammonium uptake from the soil. In Oryza sativa subsp. japonica (Rice), this protein is Ammonium transporter 1 member 1 (AMT1-1).